The chain runs to 459 residues: uncharacterized protein (459 aa).

The 59-residue stretch at 9–67 (KLEVGQTFPVTIKRLGINGEGVGYFKRQVVFIPGALPGEEVVAETTKIQRGFAEAKVKK) folds into the TRAM domain. [4Fe-4S] cluster is bound by residues Cys80, Cys86, Cys89, and Cys168. S-adenosyl-L-methionine contacts are provided by Gln292, Tyr321, Asp342, and Asp390. Cys417 functions as the Nucleophile in the catalytic mechanism.

It belongs to the class I-like SAM-binding methyltransferase superfamily. RNA M5U methyltransferase family.

This is an uncharacterized protein from Bacillus cereus (strain ATCC 10987 / NRS 248).